A 338-amino-acid polypeptide reads, in one-letter code: MVVKVGINGFGRIGRIVFRNAIEHDDIHIVAVNDPFIEPKYAAYMLRYDTTHGNFKGTIEVDGADLVVNGKKVKFYTERDPAAIPWSETGADYIVESTGVFTTTEKASAHLKGGAKKVIISAPSADAPMYVMGVNNETYDGSADVISNASCTTNCLAPLAKVIHDNFTIVEGLMTTVHSYTATQKTVDGPSAKDWRGGRTAAQNIIPSSTGAAKAVGKVIPDLNGKLTGMAMRVPTANVSVVDLTARIEKGATYDEIKEVIKKASEGPLAGILAYTEDEVVSSDMNGNPASSIFDAKAGISLNKNFVKLVSWYDNEWGYSRRVLDLISYISKVDAKKA.

Residues arginine 12–isoleucine 13, aspartate 34, and arginine 79 contribute to the NAD(+) site. Residues serine 150–threonine 152, threonine 181, threonine 210–glycine 211, and arginine 233 each bind D-glyceraldehyde 3-phosphate. The Nucleophile role is filled by cysteine 151. Asparagine 315 serves as a coordination point for NAD(+).

This sequence belongs to the glyceraldehyde-3-phosphate dehydrogenase family. Homotetramer.

The protein resides in the cytoplasm. It carries out the reaction D-glyceraldehyde 3-phosphate + phosphate + NAD(+) = (2R)-3-phospho-glyceroyl phosphate + NADH + H(+). The protein operates within carbohydrate degradation; glycolysis; pyruvate from D-glyceraldehyde 3-phosphate: step 1/5. The sequence is that of Glyceraldehyde-3-phosphate dehydrogenase (gpd-1) from Neurospora crassa (strain ATCC 24698 / 74-OR23-1A / CBS 708.71 / DSM 1257 / FGSC 987).